Here is a 214-residue protein sequence, read N- to C-terminus: Phosphatidylcholine transfer protein (214 aa).

Methionine 1 carries the N-acetylmethionine modification. The START domain maps to 1-212 (MAGAACCFSD…MVKACQNYHK (212 aa)). The a 1,2-diacyl-sn-glycero-3-phosphocholine site is built by tyrosine 72 and arginine 78. Serine 139 carries the post-translational modification Phosphoserine. Glutamine 157 contributes to the a 1,2-diacyl-sn-glycero-3-phosphocholine binding site.

Interacts with ACOT13/THEM2. Abundant in liver of pups but levels in liver decrease 10-fold about 2 weeks after birth. In adult, highly expressed in epididymis, testis, kidney and bone-marrow derived mast cells.

The protein resides in the cytoplasm. Its function is as follows. Catalyzes the transfer of phosphatidylcholine between membranes. Binds a single lipid molecule. This Mus musculus (Mouse) protein is Phosphatidylcholine transfer protein (Pctp).